Consider the following 232-residue polypeptide: Ubiquinone biosynthesis O-methyltransferase (232 aa).

S-adenosyl-L-methionine is bound by residues Arg-36, Gly-55, Asp-76, and Leu-120.

This sequence belongs to the methyltransferase superfamily. UbiG/COQ3 family.

It catalyses the reaction a 3-demethylubiquinol + S-adenosyl-L-methionine = a ubiquinol + S-adenosyl-L-homocysteine + H(+). The catalysed reaction is a 3-(all-trans-polyprenyl)benzene-1,2-diol + S-adenosyl-L-methionine = a 2-methoxy-6-(all-trans-polyprenyl)phenol + S-adenosyl-L-homocysteine + H(+). Its pathway is cofactor biosynthesis; ubiquinone biosynthesis. Functionally, O-methyltransferase that catalyzes the 2 O-methylation steps in the ubiquinone biosynthetic pathway. This is Ubiquinone biosynthesis O-methyltransferase from Pseudomonas syringae pv. tomato (strain ATCC BAA-871 / DC3000).